A 417-amino-acid chain; its full sequence is Tyrosine--tRNA ligase (417 aa).

Position 39 (Tyr39) interacts with L-tyrosine. Positions 44-53 match the 'HIGH' region motif; the sequence is PTAASLHAGG. L-tyrosine is bound by residues Tyr176 and Gln180. Residues 236-240 carry the 'KMSKS' region motif; it reads KMGKS. Lys239 contacts ATP. The S4 RNA-binding domain occupies 350 to 417; it reads LGLLTLLVRA…KKKHLLVRPV (68 aa).

Belongs to the class-I aminoacyl-tRNA synthetase family. TyrS type 1 subfamily. In terms of assembly, homodimer.

Its subcellular location is the cytoplasm. The catalysed reaction is tRNA(Tyr) + L-tyrosine + ATP = L-tyrosyl-tRNA(Tyr) + AMP + diphosphate + H(+). In terms of biological role, catalyzes the attachment of tyrosine to tRNA(Tyr) in a two-step reaction: tyrosine is first activated by ATP to form Tyr-AMP and then transferred to the acceptor end of tRNA(Tyr). The protein is Tyrosine--tRNA ligase of Rhizobium meliloti (strain 1021) (Ensifer meliloti).